The chain runs to 492 residues: uncharacterized protein (492 aa).

12 helical membrane passes run 16–36 (FIAF…VMTM), 39–59 (VGPF…GVVL), 107–127 (SFNG…IPVV), 133–153 (IIIG…FISL), 162–182 (AIFY…ILGI), 210–230 (IIFI…LASI), 243–263 (FLIA…IISG), 291–311 (LVGG…NSLA), 350–370 (VLIS…IPFL), 394–414 (MAAA…FMIF), 429–449 (VSYV…LFPF), and 454–474 (VFNT…VGFF).

The protein to M.genitalium MG225.

It is found in the cell membrane. This is an uncharacterized protein from Mycoplasma genitalium (strain ATCC 33530 / DSM 19775 / NCTC 10195 / G37) (Mycoplasmoides genitalium).